A 56-amino-acid chain; its full sequence is MAVQQNKKSRSKRGMRRSHDALSTAQLSVDATSGEIHMRHNVTADGFYRGKKVINK.

The segment at 1–26 (MAVQQNKKSRSKRGMRRSHDALSTAQ) is disordered. Over residues 7–16 (KKSRSKRGMR) the composition is skewed to basic residues.

Belongs to the bacterial ribosomal protein bL32 family.

This chain is Large ribosomal subunit protein bL32, found in Shewanella baltica (strain OS155 / ATCC BAA-1091).